The chain runs to 233 residues: MMNDKKITSFIALPDLLSMLNASSGYLSILLSIDGSLNAACILMLLAVLFDSLDGWVARKTGRIDIHGFGKNMDSLSDVISFGVAPAILIYSAAVDFRYINILVGPLIVLCGILRLSRFNVLTGGGKNFTGLPIPVAAVTISSFYLTGFYSELSAAFIMIAVSVLMISSIEYPRVDGMGASTALILIIATIISVAAVEILQAASVVAGPVAIILFIATLTYIAVPILPKRDVI.

The next 8 membrane-spanning stretches (helical) occupy residues 7 to 27 (ITSFIALPDLLSMLNASSGYL), 29 to 49 (ILLSIDGSLNAACILMLLAVL), 75 to 95 (SLSDVISFGVAPAILIYSAAV), 102 to 122 (ILVGPLIVLCGILRLSRFNVL), 126 to 146 (GKNFTGLPIPVAAVTISSFYL), 147 to 167 (TGFYSELSAAFIMIAVSVLMI), 180 to 200 (ASTALILIIATIISVAAVEIL), and 206 to 226 (VAGPVAIILFIATLTYIAVPI).

It belongs to the CDP-alcohol phosphatidyltransferase class-I family.

It is found in the membrane. The catalysed reaction is CDP-2,3-bis-O-(geranylgeranyl)-sn-glycerol + L-serine = archaetidylserine + CMP + H(+). The enzyme catalyses CDP-2,3-bis-O-(phytanyl)-sn-glycerol + L-serine = 2,3-bis-O-phytanyl-sn-glycero-3-phospho-L-serine + CMP + H(+). The protein operates within membrane lipid metabolism; glycerophospholipid metabolism. Activated by Mn(2+) ions. In terms of biological role, involved in the lipid biosynthesis. Catalyzes the formation of unsaturated archaetidylserine from CDP-unsaturated archaeol and L-serine. Activity with ester-linked substrate analogs containing straight aliphatic chains (typical bacterial substrates) is two to three times higher than that with the corresponding ether-type substrate (typical archaeal substrates). Both enantiomers of CDP-unsaturated archaeols with ether-linked geranylgeranyl chains and CDP-saturated archaeol with ether-linked phytanyl chains are similarly active. The enzyme also accepts D-serine, although activity is only about third of that with L-serine. This Methanothermobacter thermautotrophicus (strain ATCC 29096 / DSM 1053 / JCM 10044 / NBRC 100330 / Delta H) (Methanobacterium thermoautotrophicum) protein is Archaetidylserine synthase.